Reading from the N-terminus, the 774-residue chain is E3 ubiquitin-protein ligase RFWD3 (774 aa).

Disordered regions lie at residues 32–126 and 203–281; these read GTIE…TAGA and PYPL…SAME. Phosphoserine; by ATM and ATR is present on residues S59 and S75. Residues 92–103 show a composition bias toward acidic residues; that stretch reads LTEEVQPSEENM. Residues 108–121 are compositionally biased toward polar residues; the sequence is PGTSEEPSQGSGAN. Over residues 223–242 the composition is skewed to acidic residues; it reads SDSDGSAEDEEVVVQAEEPE. The RING-type; degenerate zinc finger occupies 288 to 332; the sequence is CTICLEQWTNAGDHRISALRCGHLFGFRCISKWLKGQTRKCPQCN. The stretch at 358–403 forms a coiled coil; it reads RMKSDLLNEQMLRKQAELESAQCRLQLQVLIDKCTKLNSRVQDLEK. WD repeat units follow at residues 493–535, 536–568, and 583–628; these read IPMH…VVQT, YNTG…LIYD, and KARC…SHKP.

Interacts with MDM2 and p53/TP53. Binds to the RPA complex via direct interaction with RPA2. Interacts with RAD51. Phosphorylated at Ser-59 and Ser-75 upon DNA damage by ATM or ATR. ATM phosphorylation occurs at early times upon DNA damage, while ATR is the major kinase at later times. Phosphorylation by ATM and ATR is required to stabilize p53/TP53. Part of the phosphorylation depends upon RPA2 presence.

Its subcellular location is the nucleus. The protein localises to the PML body. It is found in the cytoplasm. It carries out the reaction S-ubiquitinyl-[E2 ubiquitin-conjugating enzyme]-L-cysteine + [acceptor protein]-L-lysine = [E2 ubiquitin-conjugating enzyme]-L-cysteine + N(6)-ubiquitinyl-[acceptor protein]-L-lysine.. Its pathway is protein modification; protein ubiquitination. Its function is as follows. E3 ubiquitin-protein ligase required for the repair of DNA interstrand cross-links (ICL) in response to DNA damage. Plays a key role in RPA-mediated DNA damage signaling and repair. Acts by mediating ubiquitination of the RPA complex (RPA1, RPA2 and RPA3 subunits) and RAD51 at stalled replication forks, leading to remove them from DNA damage sites and promote homologous recombination. Also mediates the ubiquitination of p53/TP53 in the late response to DNA damage, and acts as a positive regulator of p53/TP53 stability, thereby regulating the G1/S DNA damage checkpoint. May act by catalyzing the formation of short polyubiquitin chains on p53/TP53 that are not targeted to the proteasome. In response to ionizing radiation, interacts with MDM2 and enhances p53/TP53 ubiquitination, possibly by restricting MDM2 from extending polyubiquitin chains on ubiquitinated p53/TP53. Required to translesion DNA synthesis across DNA-protein cross-link adducts by catalyzing ubiquitination of proteins on single-stranded DNA (ssDNA). This is E3 ubiquitin-protein ligase RFWD3 (Rfwd3) from Mus musculus (Mouse).